The following is a 500-amino-acid chain: Kynurenine 3-monooxygenase (500 aa).

The protein belongs to the aromatic-ring hydroxylase family. KMO subfamily. It depends on FAD as a cofactor.

It is found in the mitochondrion outer membrane. It catalyses the reaction L-kynurenine + NADPH + O2 + H(+) = 3-hydroxy-L-kynurenine + NADP(+) + H2O. It functions in the pathway cofactor biosynthesis; NAD(+) biosynthesis; quinolinate from L-kynurenine: step 1/3. Catalyzes the hydroxylation of L-kynurenine (L-Kyn) to form 3-hydroxy-L-kynurenine (L-3OHKyn). Required for synthesis of quinolinic acid. This Aspergillus terreus (strain NIH 2624 / FGSC A1156) protein is Kynurenine 3-monooxygenase (bna4).